The following is a 224-amino-acid chain: UPF0758 protein Maqu_3564 (224 aa).

One can recognise an MPN domain in the interval 102–224 (PLRSPADTRR…VISLAERGLM (123 aa)). 3 residues coordinate Zn(2+): H173, H175, and D186. A JAMM motif motif is present at residues 173–186 (HNHPSGVAEPSQAD).

It belongs to the UPF0758 family.

This is UPF0758 protein Maqu_3564 from Marinobacter nauticus (strain ATCC 700491 / DSM 11845 / VT8) (Marinobacter aquaeolei).